Consider the following 279-residue polypeptide: Energy-coupling factor transporter ATP-binding protein EcfA1 (279 aa).

An ABC transporter domain is found at 5-240 (IELKKVTFNY…GDELLQLGLD (236 aa)). 40-47 (GHNGSGKS) lines the ATP pocket.

It belongs to the ABC transporter superfamily. Energy-coupling factor EcfA family. In terms of assembly, forms a stable energy-coupling factor (ECF) transporter complex composed of 2 membrane-embedded substrate-binding proteins (S component), 2 ATP-binding proteins (A component) and 2 transmembrane proteins (T component).

It localises to the cell membrane. Functionally, ATP-binding (A) component of a common energy-coupling factor (ECF) ABC-transporter complex. Unlike classic ABC transporters this ECF transporter provides the energy necessary to transport a number of different substrates. The sequence is that of Energy-coupling factor transporter ATP-binding protein EcfA1 from Streptococcus pyogenes serotype M12 (strain MGAS2096).